Here is a 147-residue protein sequence, read N- to C-terminus: Cell division protein SepF 1 (147 aa).

It belongs to the SepF family. Homodimer. Interacts with FtsZ.

The protein resides in the cytoplasm. Cell division protein that is part of the divisome complex and is recruited early to the Z-ring. Probably stimulates Z-ring formation, perhaps through the cross-linking of FtsZ protofilaments. Its function overlaps with FtsA. This Desulforamulus reducens (strain ATCC BAA-1160 / DSM 100696 / MI-1) (Desulfotomaculum reducens) protein is Cell division protein SepF 1.